The primary structure comprises 1110 residues: Ribosome assembly protein 1 (1110 aa).

Residues 17-262 enclose the tr-type G domain; the sequence is SCIRNICIVA…QKLGAKRENL (246 aa). Residues 26–33, 102–106, and 156–159 contribute to the GTP site; these read AHVDHGKT, DSPGH, and NKID. Position 431 is a phosphoserine (S431).

It belongs to the TRAFAC class translation factor GTPase superfamily. Classic translation factor GTPase family.

Its subcellular location is the cytoplasm. It carries out the reaction GTP + H2O = GDP + phosphate + H(+). GTPase activity is stimulated in the presence of 60S subunits. In terms of biological role, GTPase involved in the biogenesis of the 60S ribosomal subunit and translational activation of ribosomes. Together with SDO1, may trigger the GTP-dependent release of TIF6 from 60S pre-ribosomes in the cytoplasm, thereby activating ribosomes for translation competence by allowing 80S ribosome assembly and facilitating TIF6 recycling to the nucleus, where it is required for 60S rRNA processing and nuclear export. Inhibits GTPase activity of ribosome-bound EF-2. This Saccharomyces cerevisiae (strain ATCC 204508 / S288c) (Baker's yeast) protein is Ribosome assembly protein 1 (RIA1).